A 307-amino-acid chain; its full sequence is Follistatin-related protein 1 (307 aa).

The first 19 residues, 1 to 19, serve as a signal peptide directing secretion; it reads MMWRRWLALALVAVAWVHA. The 24-residue stretch at 29–52 folds into the Follistatin-like domain; sequence ICANVFCGAGRECAVTEKGEPTCL. 5 disulfide bridges follow: Cys-30–Cys-41, Cys-35–Cys-51, Cys-53–Cys-83, Cys-57–Cys-76, and Cys-65–Cys-97. Residues 47–99 enclose the Kazal-like domain; the sequence is GEPTCLCIEQCKPHKRPVCGSNGKTYLNHCELHRDACLTGSKIQVDYDGHCKE. N-linked (GlcNAc...) asparagine glycosylation occurs at Asn-143. In terms of domain architecture, EF-hand 1 spans 143–177; the sequence is NYSEILDKYFKNFDNGDSRLDSSEFLKFVEQNETA. At Ser-164 the chain carries Phosphoserine. Residues Asn-174 and Asn-179 are each glycosylated (N-linked (GlcNAc...) asparagine). The EF-hand 2 domain occupies 192-227; sequence LRGLCVDALIELSDENADWKLSFQEFLKCLNPSFNP. The 55-residue stretch at 232–286 folds into the VWFC domain; sequence CALEDETYADGAETEVDCNRCVCACGNWVCTAMTCDGKNQKGAQTQAEEEMTRYV.

As to quaternary structure, homodimer. Interacts with SCN10A. Interacts with DIP2A; DIP2A may act as a cell surface receptor for FSTL1. Interacts with BMP4. Interacts with CD14; this interaction promotes TL4-mediated signaling cascade.

Its subcellular location is the secreted. In terms of biological role, secreted glycoprotein that is involved in various physiological processes, such as angiogenesis, regulation of the immune response, cell proliferation and differentiation. Plays a role in the development of the central nervous system, skeletal system, lungs, and ureter. Promotes endothelial cell survival, migration and differentiation into network structures in an AKT-dependent manner. Also promotes survival of cardiac myocytes. Initiates various signaling cascades by activating different receptors on the cell surface such as DIP2A, TLR4 or BMP receptors. This is Follistatin-related protein 1 (FSTL1) from Bos taurus (Bovine).